Consider the following 178-residue polypeptide: SCAN domain-containing protein 1 (178 aa).

Positions 1–107 (MAATEQSLAP…GSRPGPETFR (107 aa)) are disordered. The span at 9–18 (APAGSSAPPS) shows a compositional bias: low complexity. Residues 36 to 54 (GSSSTPEAPSIPDSSNPSA) show a composition bias toward polar residues. The SCAN box domain occupies 107 to 178 (RQRFRQFRYQ…RRRTDVRITG (72 aa)).

As to quaternary structure, interacts with ZNF202.

It localises to the nucleus. Functionally, may regulate transcriptional activity. The polypeptide is SCAN domain-containing protein 1 (SCAND1) (Bos taurus (Bovine)).